Consider the following 142-residue polypeptide: Protein lin-32 (142 aa).

Positions 30 to 48 are enriched in polar residues; it reads PLQSPNFSLDSPNYPDSLS. Positions 30-66 are disordered; the sequence is PLQSPNFSLDSPNYPDSLSNGGGKDDKKKCRRYKTPS. Residues 72-124 form the bHLH domain; sequence MRRSAANERERRRMNTLNVAYDELREVLPEIDSGKKLSKFETLQMAQKYIECL.

In terms of assembly, forms a heterodimer with hlh-2. As to expression, expressed in PVD motor neurons.

Its subcellular location is the nucleus. In terms of biological role, probable transcription factor which binds the E box motif 5'-CA[TC][AG]TG-3'. Essential for the specification of the neuroblast cell fate in the development of peripheral sense organs. Its role in the generation of sensory neurons may be through positively regulating the expression of the zinc finger protein ztf-11 during postdeirid neurogenesis. Required for specification of cell fate, acting in concert with lin-32, in the development of the male-specific genital sensilla (simple sense organs) known as rays. Involved in regulating glial specification, perhaps by suppressing a glial fate in different lineages during early embryogenesis. The chain is Protein lin-32 from Caenorhabditis elegans.